The sequence spans 251 residues: 5-oxoprolinase subunit A 3 (251 aa).

The protein belongs to the LamB/PxpA family. Forms a complex composed of PxpA, PxpB and PxpC.

It catalyses the reaction 5-oxo-L-proline + ATP + 2 H2O = L-glutamate + ADP + phosphate + H(+). Functionally, catalyzes the cleavage of 5-oxoproline to form L-glutamate coupled to the hydrolysis of ATP to ADP and inorganic phosphate. In Pseudomonas aeruginosa (strain ATCC 15692 / DSM 22644 / CIP 104116 / JCM 14847 / LMG 12228 / 1C / PRS 101 / PAO1), this protein is 5-oxoprolinase subunit A 3.